We begin with the raw amino-acid sequence, 243 residues long: Voltage-gated monoatomic cation channel TMEM109 (243 aa).

Residues 1 to 33 (MAGAHSNPSWSRHLFKAVLMVLGALLLVHSASA) form the signal peptide. At 34-83 (QTHREFASPGQQKRESSADILTEIGRSLKETLDTWLGPETMHVISETLLQ) the chain is on the lumenal side. A helical membrane pass occupies residues 84–104 (VMWAISSAISVACFALSGIAA). Residues 105-135 (QLLSALGLDGEQLTQVLKLSPSQVQTLLLWG) are Cytoplasmic-facing. Residues 136–156 (AAALVIYWLLSLLLGLVLALL) form a helical membrane-spanning segment. The Lumenal segment spans residues 157–185 (GRILGGLKLVLFVAGFVGLVRSVPDPSTR). A helical transmembrane segment spans residues 186 to 205 (ALLLLALLTVFALLSRLTGS). Residues 206-243 (RSSGTHLEAKVRGLERQIEELRGRQRRAAKIPRSMEEE) are Cytoplasmic-facing.

In terms of assembly, homooligomer. Interacts with CRYAB; in the cellular response to DNA damage.

It localises to the nucleus outer membrane. The protein resides in the endoplasmic reticulum membrane. The protein localises to the sarcoplasmic reticulum membrane. It catalyses the reaction K(+)(in) = K(+)(out). The enzyme catalyses Ca(2+)(in) = Ca(2+)(out). Functions as a voltage-gated monoatomic cation channel permeable to both potassium and calcium. Plays a role in the cellular response to DNA damage. This Rattus norvegicus (Rat) protein is Voltage-gated monoatomic cation channel TMEM109.